Consider the following 524-residue polypeptide: General transcription factor IIF subunit 1 (524 aa).

2 disordered regions span residues 56 to 76 (MYQEEEMPESGAGSEYNRKQR) and 181 to 462 (RLKD…IQLT). The segment covering 242–257 (KPQKKVPAKGGKKKKR) has biased composition (basic residues). Residues 262–289 (EALEDSDDGDFEGQEVDYMSDESSSDEE) show a composition bias toward acidic residues. The segment covering 290–307 (LPGKIKPAKEEEGPKGLD) has biased composition (basic and acidic residues). 2 stretches are compositionally biased toward acidic residues: residues 308-327 (EQSESSEESEEEKAEEEEGE) and 347-358 (SDESETSEDSDI). Residues 368–378 (QKKKTPPKKDK) show a composition bias toward basic residues. Low complexity predominate over residues 381 to 397 (GSNSSSRGNSRPGTPSP). Polar residues predominate over residues 436-459 (PQNTSGKSTPQPQSGKSTPSSGDI).

The protein belongs to the TFIIF alpha subunit family. As to quaternary structure, heterodimer of an alpha and a beta subunit. Post-translationally, phosphorylated on Ser and other residues by TAF1 and casein kinase II-like kinases.

It localises to the nucleus. In terms of biological role, TFIIF is a general transcription initiation factor that binds to RNA polymerase II and helps to recruit it to the initiation complex in collaboration with TFIIB. It promotes transcription elongation. This chain is General transcription factor IIF subunit 1 (gtf2f1), found in Xenopus laevis (African clawed frog).